A 332-amino-acid chain; its full sequence is D-xylose-binding periplasmic protein (332 aa).

An N-terminal signal peptide occupies residues 1–23 (MKIKSALLTLVGALTVFSSSAHS).

Belongs to the bacterial solute-binding protein 2 family.

The protein resides in the periplasm. Involved in the high-affinity D-xylose membrane transport system. Binds with high affinity to xylose. This Haemophilus influenzae (strain ATCC 51907 / DSM 11121 / KW20 / Rd) protein is D-xylose-binding periplasmic protein (xylF).